Consider the following 281-residue polypeptide: Pantothenate synthetase (281 aa).

30-37 (MGNLHQGH) lines the ATP pocket. The active-site Proton donor is His-37. Gln-61 is a binding site for (R)-pantoate. Gln-61 contacts beta-alanine. 149–152 (GNKD) is an ATP binding site. Gln-155 provides a ligand contact to (R)-pantoate. Residues Ile-178 and 186-189 (MSSR) each bind ATP.

Belongs to the pantothenate synthetase family. Homodimer.

The protein resides in the cytoplasm. The catalysed reaction is (R)-pantoate + beta-alanine + ATP = (R)-pantothenate + AMP + diphosphate + H(+). The protein operates within cofactor biosynthesis; (R)-pantothenate biosynthesis; (R)-pantothenate from (R)-pantoate and beta-alanine: step 1/1. Functionally, catalyzes the condensation of pantoate with beta-alanine in an ATP-dependent reaction via a pantoyl-adenylate intermediate. The sequence is that of Pantothenate synthetase from Shewanella sp. (strain ANA-3).